Here is a 66-residue protein sequence, read N- to C-terminus: Sarcoplasmic/endoplasmic reticulum calcium ATPase regulator ARLN (66 aa).

N-acetylmethionine is present on methionine 1. The interval 1–38 (MEVDVPGVDGRDGLRERRGLSEGGRQNLDVRPQSGANG) is disordered. The segment covering 9–20 (DGRDGLRERRGL) has biased composition (basic and acidic residues). A helical membrane pass occupies residues 45 to 65 (WLDLWLFIFFDVVVFLFVYFL).

In terms of assembly, homooligomer. Can also form heterooligomers with other sarcoplasmic/endoplasmic reticulum calcium ATPase (SERCA) regulators ERLN, PLN, SLN and STRIT1/DWORF. Monomer. Interacts as a monomer with ATP2A2/SERCA2; the interaction results in inhibition of ATP2A2 Ca(2+) affinity.

The protein resides in the endoplasmic reticulum membrane. In terms of biological role, inhibits the activity of the calcium ATPases ATP2A2/SERCA2 and ATP2A3/SERCA3 by decreasing their apparent affinity for Ca(2+). In Pongo abelii (Sumatran orangutan), this protein is Sarcoplasmic/endoplasmic reticulum calcium ATPase regulator ARLN (ARLN).